The primary structure comprises 678 residues: Probable antibacterial peptide polyprotein (678 aa).

14 repeat units span residues 1–67 (MRSP…PEVR), 68–114 (ERRS…PEVR), 115–161 (ERRS…PEVR), 162–208 (ERRS…PEVR), 209–255 (ERRS…PEVR), 256–302 (ERGS…PEVR), 303–349 (ERRS…PEVR), 350–396 (ERRS…PEVR), 397–443 (ERRS…PEVR), 444–490 (ERRS…PEVR), 491–537 (ERRS…PEVR), 538–584 (ERRS…PEVR), 585–631 (ERRS…PEVR), and 632–678 (ERRS…PEVR). Positions 1–678 (MRSPRVIHLA…SEGVVLPEVR (678 aa)) are 14 X approximate tandem repeats. Threonine 32 carries O-linked (GalNAc...) threonine glycosylation. 2 disordered regions span residues 58 to 97 (SEAE…DASL) and 113 to 678 (VRER…PEVR). Over residues 64–73 (PEVRERRSPV) the composition is skewed to basic and acidic residues. O-linked (GalNAc...) threonine glycosylation is found at threonine 83 and threonine 130. Over residues 145-157 (ESELSPLSEAEVL) the composition is skewed to low complexity. The segment covering 158 to 167 (PEVRERRSPV) has biased composition (basic and acidic residues). An O-linked (GalNAc...) threonine glycan is attached at threonine 177. The segment covering 188 to 204 (VASLESELSPLSEAEVL) has biased composition (low complexity). Basic and acidic residues predominate over residues 205 to 214 (PEVRERRSPV). 2 O-linked (GalNAc...) threonine glycosylation sites follow: threonine 224 and threonine 271. The span at 299–308 (PEVRERRSPV) shows a compositional bias: basic and acidic residues. Threonine 318 carries an O-linked (GalNAc...) threonine glycan. The span at 333–345 (ESELSPLSEAEVL) shows a compositional bias: low complexity. Residues 346 to 355 (PEVRERRSPV) show a composition bias toward basic and acidic residues. Residue threonine 365 is glycosylated (O-linked (GalNAc...) threonine). Low complexity predominate over residues 380-392 (ESELSPLSEAEVL). Over residues 393–402 (PEVRERRSPV) the composition is skewed to basic and acidic residues. Residue threonine 412 is glycosylated (O-linked (GalNAc...) threonine). Over residues 427 to 439 (ESELSPLSEAEVL) the composition is skewed to low complexity. Over residues 440 to 449 (PEVRERRSPV) the composition is skewed to basic and acidic residues. Residue threonine 459 is glycosylated (O-linked (GalNAc...) threonine). Positions 474 to 486 (ESELSPLSEAEVL) are enriched in low complexity. The segment covering 487 to 496 (PEVRERRSPV) has biased composition (basic and acidic residues). The O-linked (GalNAc...) threonine glycan is linked to threonine 506. Over residues 521–533 (ESELSPSSEAEVL) the composition is skewed to low complexity. Over residues 534-543 (PEVRERRSPV) the composition is skewed to basic and acidic residues. Residue threonine 553 is glycosylated (O-linked (GalNAc...) threonine). Residues 568–580 (ESELSPLSEAEVL) show a composition bias toward low complexity. Residues 581–590 (PEVRERRSPV) are compositionally biased toward basic and acidic residues. Residue threonine 600 is glycosylated (O-linked (GalNAc...) threonine). Residues 615-627 (ESELSPLSEAEGL) are compositionally biased toward low complexity. O-linked (GalNAc...) threonine glycosylation is present at threonine 647.

Its subcellular location is the secreted. In terms of biological role, has antibacterial activity in vitro. The chain is Probable antibacterial peptide polyprotein from Riptortus clavatus (Bean bug).